The following is a 60-amino-acid chain: Cytotoxin 10 (60 aa).

4 cysteine pairs are disulfide-bonded: cysteine 3/cysteine 21, cysteine 14/cysteine 38, cysteine 42/cysteine 53, and cysteine 54/cysteine 59.

It belongs to the three-finger toxin family. Short-chain subfamily. Type IA cytotoxin sub-subfamily. In terms of assembly, monomer in solution; Homodimer and oligomer in the presence of negatively charged lipids forming a pore with a size ranging between 20 and 30 Angstroms. Expressed by the venom gland.

It localises to the secreted. Its subcellular location is the target cell membrane. Shows cytolytic activity on many different cells by forming pore in lipid membranes. In vivo, increases heart rate or kills the animal by cardiac arrest. In addition, it binds to heparin with high affinity, interacts with Kv channel-interacting protein 1 (KCNIP1) in a calcium-independent manner, and binds to integrin alpha-V/beta-3 (ITGAV/ITGB3) with moderate affinity. The protein is Cytotoxin 10 of Naja annulifera (Banded Egyptian cobra).